Reading from the N-terminus, the 425-residue chain is Glutamyl-tRNA reductase (425 aa).

Residues Thr47 to Arg50, Ser107, Glu112 to Gln114, and Gln118 each bind substrate. Cys48 functions as the Nucleophile in the catalytic mechanism. Gly187 to Ala192 provides a ligand contact to NADP(+).

It belongs to the glutamyl-tRNA reductase family. In terms of assembly, homodimer.

The enzyme catalyses (S)-4-amino-5-oxopentanoate + tRNA(Glu) + NADP(+) = L-glutamyl-tRNA(Glu) + NADPH + H(+). It functions in the pathway porphyrin-containing compound metabolism; protoporphyrin-IX biosynthesis; 5-aminolevulinate from L-glutamyl-tRNA(Glu): step 1/2. It participates in porphyrin-containing compound metabolism; chlorophyll biosynthesis. Its function is as follows. Catalyzes the NADPH-dependent reduction of glutamyl-tRNA(Glu) to glutamate 1-semialdehyde (GSA). The sequence is that of Glutamyl-tRNA reductase from Roseiflexus sp. (strain RS-1).